A 548-amino-acid chain; its full sequence is Druantia protein DruB (548 aa).

It localises to the cytoplasm. In terms of biological role, component of antiviral defense system Druantia type I, composed of DruA, DruB, DruC, DruD and DruE. Expression of Druantia in E.coli (strain MG1655) confers resistance to phage lambda, SECphi18, SECphi27 and T4. The polypeptide is Druantia protein DruB (Escherichia coli (strain UMEA 4076-1)).